The primary structure comprises 201 residues: FMN-dependent NADH:quinone oxidoreductase (201 aa).

92–95 serves as a coordination point for FMN; that stretch reads MWNL.

This sequence belongs to the azoreductase type 1 family. Homodimer. FMN serves as cofactor.

It catalyses the reaction 2 a quinone + NADH + H(+) = 2 a 1,4-benzosemiquinone + NAD(+). The catalysed reaction is N,N-dimethyl-1,4-phenylenediamine + anthranilate + 2 NAD(+) = 2-(4-dimethylaminophenyl)diazenylbenzoate + 2 NADH + 2 H(+). Functionally, quinone reductase that provides resistance to thiol-specific stress caused by electrophilic quinones. In terms of biological role, also exhibits azoreductase activity. Catalyzes the reductive cleavage of the azo bond in aromatic azo compounds to the corresponding amines. The sequence is that of FMN-dependent NADH:quinone oxidoreductase from Caldicellulosiruptor bescii (strain ATCC BAA-1888 / DSM 6725 / KCTC 15123 / Z-1320) (Anaerocellum thermophilum).